The chain runs to 1312 residues: uncharacterized protein (1312 aa).

An N-terminal signal peptide occupies residues 1–20 (MRNNLIYTMFLSCLHFETFC). Residues 299–344 (TTTSSSTMLSSTTLLTTETETRESSSTGSTQTTTPSTEPSTTITTP) show a composition bias toward low complexity. Disordered stretches follow at residues 299 to 503 (TTTS…TTTY), 565 to 609 (EITS…PTGG), 645 to 692 (KETR…PTGG), 749 to 775 (SSSSKFSITPTPTPSSGTTTYNWPTGG), 812 to 864 (KTRT…GGTT), 899 to 942 (KTRT…PTGG), 1048 to 1079 (KTRTETTSDAQGCKATSTTQTPTTFNWPTGGT), and 1114 to 1165 (NTTR…TLET). Polar residues predominate over residues 345–357 (MEQSSTVSSVQKT). The span at 365-503 (SSSTTVPTSA…STPATPTTTY (139 aa)) shows a compositional bias: low complexity. Over residues 565-574 (EITSDAEGCK) the composition is skewed to basic and acidic residues. Over residues 576 to 609 (TSSTPTPSSTSVHSTTATPSTTPGTTTYNWPTGG) the composition is skewed to low complexity. A compositionally biased stretch (basic and acidic residues) spans 645 to 659 (KETRTETTTDADGCK). Residues 660–692 (KTSSTSSSTPSLKHSTTPTPTPGTTTYNWPTGG) show a composition bias toward low complexity. Basic and acidic residues predominate over residues 813–825 (TRTETTTDAEGCK). Residues 826–864 (KTSSTSKISTTPTSPTSSKPTPTSTSMTTTYNWPTGGTT) show a composition bias toward low complexity. The segment covering 899–908 (KTRTETTTDA) has biased composition (polar residues). Residues 914 to 942 (TSSTSLKPTSPSSSTASPPTTTYNWPTGG) show a composition bias toward low complexity. Polar residues predominate over residues 1048 to 1057 (KTRTETTSDA). Low complexity predominate over residues 1063–1076 (TSTTQTPTTFNWPT). Residues 1114–1123 (NTTRTETTSD) show a composition bias toward polar residues. Over residues 1130–1154 (TSSGTTSTMSPGTTGGTTVSRTTNS) the composition is skewed to low complexity. Polar residues predominate over residues 1155-1164 (NNPIDSSTLE). Residues 1239 to 1306 (ATCSSLNLNL…WSGTPEKCVA (68 aa)) enclose the Sushi domain. 2 cysteine pairs are disulfide-bonded: Cys-1241–Cys-1291 and Cys-1273–Cys-1304.

The protein localises to the secreted. This is an uncharacterized protein from Caenorhabditis elegans.